A 221-amino-acid polypeptide reads, in one-letter code: Small ribosomal subunit protein uS5 (221 aa).

Residues 1–40 (MMAQRNSGAPDNAGGSNDGREGGRGRRDNRDDRRGGRDNA) are disordered. The segment covering 18–40 (DGREGGRGRRDNRDDRRGGRDNA) has biased composition (basic and acidic residues). The region spanning 45–108 (YLERVVTINR…DEARKNFFRV (64 aa)) is the S5 DRBM domain.

This sequence belongs to the universal ribosomal protein uS5 family. Part of the 30S ribosomal subunit. Contacts proteins S4 and S8.

Its function is as follows. With S4 and S12 plays an important role in translational accuracy. In terms of biological role, located at the back of the 30S subunit body where it stabilizes the conformation of the head with respect to the body. The chain is Small ribosomal subunit protein uS5 from Mycobacteroides abscessus (strain ATCC 19977 / DSM 44196 / CCUG 20993 / CIP 104536 / JCM 13569 / NCTC 13031 / TMC 1543 / L948) (Mycobacterium abscessus).